A 471-amino-acid chain; its full sequence is UTP--glucose-1-phosphate uridylyltransferase (471 aa).

UTP is bound by residues 87-90 (LNGG), lysine 101, glutamine 164, and glycine 193. 89–90 (GG) contributes to the substrate binding site. Residues histidine 194 and 222–224 (NSD) contribute to the substrate site. Residues aspartate 224 and lysine 362 each coordinate UTP.

The protein belongs to the UDPGP type 1 family.

The protein resides in the cytoplasm. The enzyme catalyses alpha-D-glucose 1-phosphate + UTP + H(+) = UDP-alpha-D-glucose + diphosphate. In terms of biological role, plays a central role as a glucosyl donor in cellular metabolic pathways. The polypeptide is UTP--glucose-1-phosphate uridylyltransferase (Pyrus pyrifolia (Chinese pear)).